Here is a 379-residue protein sequence, read N- to C-terminus: Cytochrome b (379 aa).

4 consecutive transmembrane segments (helical) span residues Phe-33–Met-53, Trp-77–Val-98, Trp-113–Leu-133, and Phe-178–Leu-198. Residues His-83 and His-97 each contribute to the heme b site. Heme b contacts are provided by His-182 and His-196. His-201 provides a ligand contact to a ubiquinone. 4 consecutive transmembrane segments (helical) span residues Ile-226–Phe-246, Leu-288–Asn-308, Ile-320–Gly-340, and Phe-347–Pro-367.

This sequence belongs to the cytochrome b family. As to quaternary structure, the cytochrome bc1 complex contains 11 subunits: 3 respiratory subunits (MT-CYB, CYC1 and UQCRFS1), 2 core proteins (UQCRC1 and UQCRC2) and 6 low-molecular weight proteins (UQCRH/QCR6, UQCRB/QCR7, UQCRQ/QCR8, UQCR10/QCR9, UQCR11/QCR10 and a cleavage product of UQCRFS1). This cytochrome bc1 complex then forms a dimer. The cofactor is heme b.

It localises to the mitochondrion inner membrane. In terms of biological role, component of the ubiquinol-cytochrome c reductase complex (complex III or cytochrome b-c1 complex) that is part of the mitochondrial respiratory chain. The b-c1 complex mediates electron transfer from ubiquinol to cytochrome c. Contributes to the generation of a proton gradient across the mitochondrial membrane that is then used for ATP synthesis. The polypeptide is Cytochrome b (MT-CYB) (Deltamys kempi (Kemp's grass mouse)).